The sequence spans 159 residues: Immunoglobulin J chain (159 aa).

The N-terminal stretch at 1–21 (MKTHLLLWGVLAIFVKAVLVT) is a signal peptide. Intrachain disulfides connect Cys34–Cys123, Cys93–Cys113, and Cys131–Cys156. N-linked (GlcNAc...) (complex) asparagine glycosylation is present at Asn70.

As to quaternary structure, part of the secretory IgA (sIgA) complex that consists of two, four or five IgA monomers, and two additional non-Ig polypeptides, namely the JCHAIN and the secretory component (the proteolytic product of PIGR). Part of the secretory IgM (sIgM) complex that consist of five IgM monomers, and two additional non-Ig polypeptides, namely the JCHAIN and the secretory component (the proteolytic product of PIGR). JCHAIN-containing IgM interacts (via CH4 domain) with FCRM (via Ig-like domain).

It is found in the secreted. In terms of biological role, serves to link two monomer units of either IgM or IgA. In the case of IgM, the J chain-joined dimer is a nucleating unit for the IgM pentamer, and in the case of IgA it induces dimers and/or larger polymers. It also helps to bind these immunoglobulins to secretory component. The chain is Immunoglobulin J chain from Mus musculus (Mouse).